The chain runs to 255 residues: Imidazole glycerol phosphate synthase subunit HisF (255 aa).

Residues aspartate 11 and aspartate 130 contribute to the active site.

Belongs to the HisA/HisF family. As to quaternary structure, heterodimer of HisH and HisF.

The protein localises to the cytoplasm. The enzyme catalyses 5-[(5-phospho-1-deoxy-D-ribulos-1-ylimino)methylamino]-1-(5-phospho-beta-D-ribosyl)imidazole-4-carboxamide + L-glutamine = D-erythro-1-(imidazol-4-yl)glycerol 3-phosphate + 5-amino-1-(5-phospho-beta-D-ribosyl)imidazole-4-carboxamide + L-glutamate + H(+). Its pathway is amino-acid biosynthesis; L-histidine biosynthesis; L-histidine from 5-phospho-alpha-D-ribose 1-diphosphate: step 5/9. In terms of biological role, IGPS catalyzes the conversion of PRFAR and glutamine to IGP, AICAR and glutamate. The HisF subunit catalyzes the cyclization activity that produces IGP and AICAR from PRFAR using the ammonia provided by the HisH subunit. This Rhodopseudomonas palustris (strain BisB5) protein is Imidazole glycerol phosphate synthase subunit HisF.